The chain runs to 535 residues: MTEKFLFLYLSLLPMPLLSQAQWNENSLVSFSKIIASGNHLSNCWICHNFITRSSSYQYILVRNFSLNLTFGSGIPEGQHKSVPLQVSLANSAHQVPCLDLTPPFNQSSKTSFYFYNCSSLNQTCCPCPEGHCDRKNTSEEGFPSPTIHPMSFSPAGCHPNLTHWCPAKQMNDYRDKSPQNRCAAWEGKELITWRVLYSLPKAHTVPTWPKSTVPLGGPLSPACNQTIPAGWKSQLHKWFDSHIPRWACTPPGYVFLCGPQKNKLPFDGSPKITYSTPPVANLYTCINNIQHTGECAVGLLGPRGIGVTIYNTTQPRQKRALGLILAGMGAAIGMIAPWGGFTYHDVTLRNLSRQIDNIAKSTRDSISKLKASIDSLANVVMDNRLALDYLLAEQGGVCAVINKSCCVYVNNSGAIEEDIKKIYDEATWLHDFGKGGASARAIWEAVKSALPSLNWFVPLLGPATVILLLFLFGPCFFNLLIKCVSSRIKQFHMKSPQMERYQLSVIGGPSTYKHISPLDASGQRFRETMEEFSL.

A signal peptide spans 1–21; it reads MTEKFLFLYLSLLPMPLLSQA. Residues 22-321 lie on the Extracellular side of the membrane; it reads QWNENSLVSF…NTTQPRQKRA (300 aa). An N-linked (GlcNAc...) asparagine glycan is attached at asparagine 68. Residues 322-342 form a helical membrane-spanning segment; the sequence is LGLILAGMGAAIGMIAPWGGF. At 343-456 the chain is on the cytoplasmic side; sequence TYHDVTLRNL…VKSALPSLNW (114 aa). A helical membrane pass occupies residues 457–477; the sequence is FVPLLGPATVILLLFLFGPCF. Topologically, residues 478 to 535 are extracellular; it reads FNLLIKCVSSRIKQFHMKSPQMERYQLSVIGGPSTYKHISPLDASGQRFRETMEEFSL.

The protein belongs to the gamma type-C retroviral envelope protein family. In terms of tissue distribution, expressed in placenta.

It localises to the membrane. The polypeptide is Endogenous retrovirus group V member 2 Env polyprotein (ERVV-2) (Homo sapiens (Human)).